The primary structure comprises 435 residues: 5-methylthioadenosine/S-adenosylhomocysteine deaminase (435 aa).

His-65 and His-67 together coordinate Zn(2+). Residues Glu-94, Arg-150, and His-189 each coordinate substrate. Residue His-216 coordinates Zn(2+). Positions 219 and 304 each coordinate substrate. Asp-304 lines the Zn(2+) pocket.

This sequence belongs to the metallo-dependent hydrolases superfamily. MTA/SAH deaminase family. It depends on Zn(2+) as a cofactor.

The enzyme catalyses S-adenosyl-L-homocysteine + H2O + H(+) = S-inosyl-L-homocysteine + NH4(+). It carries out the reaction S-methyl-5'-thioadenosine + H2O + H(+) = S-methyl-5'-thioinosine + NH4(+). In terms of biological role, catalyzes the deamination of 5-methylthioadenosine and S-adenosyl-L-homocysteine into 5-methylthioinosine and S-inosyl-L-homocysteine, respectively. Is also able to deaminate adenosine. In Bacillus cereus (strain ATCC 10987 / NRS 248), this protein is 5-methylthioadenosine/S-adenosylhomocysteine deaminase.